Consider the following 365-residue polypeptide: tRNA N6-adenosine threonylcarbamoyltransferase (365 aa).

Residues His122 and His126 each contribute to the Fe cation site. Residues 147–151 (LVSGG), Asp180, Gly193, and Asn293 each bind substrate. Asp321 is a binding site for Fe cation. The tract at residues 340-365 (PNEIDTAARPRWPLSERTPATPEHVS) is disordered.

It belongs to the KAE1 / TsaD family. Fe(2+) serves as cofactor.

Its subcellular location is the cytoplasm. It catalyses the reaction L-threonylcarbamoyladenylate + adenosine(37) in tRNA = N(6)-L-threonylcarbamoyladenosine(37) in tRNA + AMP + H(+). Functionally, required for the formation of a threonylcarbamoyl group on adenosine at position 37 (t(6)A37) in tRNAs that read codons beginning with adenine. Is involved in the transfer of the threonylcarbamoyl moiety of threonylcarbamoyl-AMP (TC-AMP) to the N6 group of A37, together with TsaE and TsaB. TsaD likely plays a direct catalytic role in this reaction. In Gluconobacter oxydans (strain 621H) (Gluconobacter suboxydans), this protein is tRNA N6-adenosine threonylcarbamoyltransferase.